We begin with the raw amino-acid sequence, 152 residues long: SsrA-binding protein (152 aa).

This sequence belongs to the SmpB family.

It localises to the cytoplasm. Functionally, required for rescue of stalled ribosomes mediated by trans-translation. Binds to transfer-messenger RNA (tmRNA), required for stable association of tmRNA with ribosomes. tmRNA and SmpB together mimic tRNA shape, replacing the anticodon stem-loop with SmpB. tmRNA is encoded by the ssrA gene; the 2 termini fold to resemble tRNA(Ala) and it encodes a 'tag peptide', a short internal open reading frame. During trans-translation Ala-aminoacylated tmRNA acts like a tRNA, entering the A-site of stalled ribosomes, displacing the stalled mRNA. The ribosome then switches to translate the ORF on the tmRNA; the nascent peptide is terminated with the 'tag peptide' encoded by the tmRNA and targeted for degradation. The ribosome is freed to recommence translation, which seems to be the essential function of trans-translation. This is SsrA-binding protein from Rickettsia bellii (strain RML369-C).